The following is a 178-amino-acid chain: Endothelin-2 (178 aa).

A signal peptide spans 1–24; it reads MVSVPTAWCSVALALLVALHEGKD. The propeptide occupies 25–46; that stretch reads QAAATLEQPASSPRARAAHLRL. Intrachain disulfides connect cysteine 49-cysteine 63 and cysteine 51-cysteine 59. Positions 70–178 are excised as a propeptide; it reads VNTPGQTAPY…RTTHSRHRKR (109 aa). The segment at 96 to 111 is endothelin-like; the sequence is CECSSARDPACATFCH. The disordered stretch occupies residues 154 to 178; the sequence is KTHFAKRQQEATREPRTTHSRHRKR. Positions 160–170 are enriched in basic and acidic residues; it reads RQQEATREPRT.

The protein belongs to the endothelin/sarafotoxin family.

The protein resides in the secreted. Its function is as follows. Endothelins are endothelium-derived vasoconstrictor peptides. The protein is Endothelin-2 (EDN2) of Oryctolagus cuniculus (Rabbit).